Here is a 412-residue protein sequence, read N- to C-terminus: Transcription termination factor 3, mitochondrial (412 aa).

Residues 1-67 (MALLAQQLPR…IKTYRTLFWN (67 aa)) constitute a mitochondrion transit peptide.

Belongs to the mTERF family.

It is found in the mitochondrion. Binds promoter DNA and regulates initiation of transcription. Required for normal mitochondrial transcription and translation, and for normal assembly of mitochondrial respiratory complexes. Required for normal mitochondrial function. Maintains 16S rRNA levels and functions in mitochondrial ribosome assembly by regulating the biogenesis of the 39S ribosomal subunit. This Mus musculus (Mouse) protein is Transcription termination factor 3, mitochondrial (Mterf3).